The following is a 550-amino-acid chain: Carboxypeptidase Y homolog A (550 aa).

The N-terminal stretch at 1–17 (MRVLSATLLAGAASAAA) is a signal peptide. Positions 18 to 131 (PPFQQVLGAH…RLEAYNLRAK (114 aa)) are excised as a propeptide. Intrachain disulfides connect Cys-186/Cys-426, Cys-320/Cys-334, Cys-344/Cys-367, Cys-351/Cys-360, and Cys-389/Cys-396. N-linked (GlcNAc...) asparagine glycosylation is present at Asn-217. Ser-273 is an active-site residue. Asp-465 is a catalytic residue. A glycan (N-linked (GlcNAc...) asparagine) is linked at Asn-516. His-527 is a catalytic residue.

It belongs to the peptidase S10 family.

The protein localises to the vacuole. The catalysed reaction is Release of a C-terminal amino acid with broad specificity.. Its function is as follows. Vacuolar carboxypeptidase involved in degradation of small peptides. Digests preferentially peptides containing an aliphatic or hydrophobic residue in P1' position, as well as methionine, leucine or phenylalanine in P1 position of ester substrate. This Penicillium rubens (strain ATCC 28089 / DSM 1075 / NRRL 1951 / Wisconsin 54-1255) (Penicillium chrysogenum) protein is Carboxypeptidase Y homolog A (cpyA).